Consider the following 180-residue polypeptide: Beta-lactoglobulin-1 (180 aa).

The first 18 residues, 1-18 (MKCLLLALGLALMCGIQA), serve as a signal peptide directing secretion. 2 disulfides stabilise this stretch: cysteine 84-cysteine 178 and cysteine 124-cysteine 137.

Belongs to the calycin superfamily. Lipocalin family. As to quaternary structure, monomer.

The protein resides in the secreted. Lactoglobulin is the primary component of whey, it binds retinol and is probably involved in the transport of that molecule. This is Beta-lactoglobulin-1 (LGB1) from Equus caballus (Horse).